Consider the following 155-residue polypeptide: RNA pyrophosphohydrolase (155 aa).

The region spanning 5 to 147 is the Nudix hydrolase domain; it reads KYRPNVAAII…KRQVYRQVIA (143 aa). The Nudix box signature appears at 42 to 63; it reads GGIDEGETPLEALHRELLEEIG.

The protein belongs to the Nudix hydrolase family. RppH subfamily. A divalent metal cation is required as a cofactor.

Its function is as follows. Accelerates the degradation of transcripts by removing pyrophosphate from the 5'-end of triphosphorylated RNA, leading to a more labile monophosphorylated state that can stimulate subsequent ribonuclease cleavage. In Helicobacter pylori (strain HPAG1), this protein is RNA pyrophosphohydrolase.